Reading from the N-terminus, the 587-residue chain is APOBEC1 complementation factor (587 aa).

RRM domains lie at 56–134 (CEIF…ASVD), 136–218 (CRLF…WAEP), and 231–303 (KILY…LAKP). The interval 360 to 409 (HFPATKGHLSNRAIIRAPSVRGAAGVRGLGGRGYLAYTGLGRGYQVKGDK) is required for nuclear localization. A Phosphothreonine modification is found at Thr-491.

As to quaternary structure, part of the apolipoprotein B mRNA editing complex with APOBEC1. Interacts with TNPO2; TNPO2 may be responsible for transport of A1CF into the nucleus. Interacts with SYNCRIP. Interacts with CELF2/CUGBP2. Interacts with RBM47.

Its subcellular location is the nucleus. The protein resides in the endoplasmic reticulum. The protein localises to the cytoplasm. In terms of biological role, essential component of the apolipoprotein B mRNA editing enzyme complex which is responsible for the postranscriptional editing of a CAA codon for Gln to a UAA codon for stop in APOB mRNA. Binds to APOB mRNA and is probably responsible for docking the catalytic subunit, APOBEC1, to the mRNA to allow it to deaminate its target cytosine. The complex also seems to protect the edited APOB mRNA from nonsense-mediated decay. This chain is APOBEC1 complementation factor (A1CF), found in Pongo abelii (Sumatran orangutan).